The chain runs to 235 residues: 5'-methylthioadenosine/S-adenosylhomocysteine nucleosidase (235 aa).

Glutamate 13 (proton acceptor) is an active-site residue. Substrate-binding positions include glycine 79, methionine 154, and methionine 175 to glutamate 176. Aspartate 199 serves as the catalytic Proton donor.

Belongs to the PNP/UDP phosphorylase family. MtnN subfamily.

It catalyses the reaction S-adenosyl-L-homocysteine + H2O = S-(5-deoxy-D-ribos-5-yl)-L-homocysteine + adenine. It carries out the reaction S-methyl-5'-thioadenosine + H2O = 5-(methylsulfanyl)-D-ribose + adenine. The enzyme catalyses 5'-deoxyadenosine + H2O = 5-deoxy-D-ribose + adenine. The protein operates within amino-acid biosynthesis; L-methionine biosynthesis via salvage pathway; S-methyl-5-thio-alpha-D-ribose 1-phosphate from S-methyl-5'-thioadenosine (hydrolase route): step 1/2. Functionally, catalyzes the irreversible cleavage of the glycosidic bond in both 5'-methylthioadenosine (MTA) and S-adenosylhomocysteine (SAH/AdoHcy) to adenine and the corresponding thioribose, 5'-methylthioribose and S-ribosylhomocysteine, respectively. Also cleaves 5'-deoxyadenosine, a toxic by-product of radical S-adenosylmethionine (SAM) enzymes, into 5-deoxyribose and adenine. In Chromohalobacter salexigens (strain ATCC BAA-138 / DSM 3043 / CIP 106854 / NCIMB 13768 / 1H11), this protein is 5'-methylthioadenosine/S-adenosylhomocysteine nucleosidase.